The following is an 856-amino-acid chain: DNA mismatch repair protein MutS (856 aa).

609–616 (GPNMSGKS) provides a ligand contact to ATP.

The protein belongs to the DNA mismatch repair MutS family.

In terms of biological role, this protein is involved in the repair of mismatches in DNA. It is possible that it carries out the mismatch recognition step. This protein has a weak ATPase activity. This Finegoldia magna (strain ATCC 29328 / DSM 20472 / WAL 2508) (Peptostreptococcus magnus) protein is DNA mismatch repair protein MutS.